The sequence spans 592 residues: MGLCVEENITMLQKRSDTLDRLRHSLAHVMAEAVQALFPGTKLAVGPPIDYGFYYDFSPPRPLCDADLAPIEEKMRAILRAGCPFVKEVVSRPDALARFKDEPFKQELIERISADDTLSLYHSGAFTDLCRGPHVQSMRDINPHAFKLTSIAGAYWRGNERGPQLTRIYGTAWESEEDLHTYLRMQDEAKRRDHRKLGPALGLFHLDEENPGQVFWHPEGWTLYVAIQQYLRRVMHEDGYAEVHTPFVMPQSLWERSGHWDKYRANMYLTEGEKRSFALKPMNCPGHVEIFKQKTRSYRDLPLRLSEFGSCTRNEPSGSLHGVMRVRGFVQDDAHIFCTEAQIASEVTRFCRLLARVYADFGFAQEQIRVKFSTRPEQRIGDDATWDRAERALAEACEAAGLSYEHAPGEGAFYGPKLEFALIDTLEREWQCGTIQVDYQLPSCERLNAEYVGEDNQRHMPVILHRTVIGSLERFIGILIEHYGGAFPPWLAPVQAVVIPVAPAFLEYAQHVARELCARSLRVQADVSAERMNAKIRTAQTQKVPYLLIVGERELRAQQVAVRPRTGPQHSMGLSAFSTFLLAKLETRALHA.

The tract at residues 193–488 is catalytic; it reads DHRKLGPALG…LIEHYGGAFP (296 aa). Residues Cys-284, His-335, and His-465 each coordinate Zn(2+).

Belongs to the class-II aminoacyl-tRNA synthetase family. Homodimer. Requires Zn(2+) as cofactor.

Its subcellular location is the cytoplasm. The catalysed reaction is tRNA(Thr) + L-threonine + ATP = L-threonyl-tRNA(Thr) + AMP + diphosphate + H(+). In terms of biological role, catalyzes the attachment of threonine to tRNA(Thr) in a two-step reaction: L-threonine is first activated by ATP to form Thr-AMP and then transferred to the acceptor end of tRNA(Thr). Also edits incorrectly charged L-seryl-tRNA(Thr). The polypeptide is Threonine--tRNA ligase (Treponema pallidum (strain Nichols)).